Here is a 259-residue protein sequence, read N- to C-terminus: Probable ABC transporter arginine-binding protein ArtJ (259 aa).

The signal sequence occupies residues 1-25 (MIKQIGRFFRAFIFIMPLSLTSCES). The L-arginine site is built by Asn38, Glu45, Ala96, Gly97, Ser99, Arg104, and Phe149.

The protein belongs to the bacterial solute-binding protein 3 family.

The protein localises to the secreted. The protein resides in the cell surface. In terms of biological role, probably part of an ABC transporter complex involved in arginine transport. Binds arginine. Interacts with host epithelial cells, suggesting a role in host-cell adhesion during infection. The chain is Probable ABC transporter arginine-binding protein ArtJ from Chlamydia pneumoniae (Chlamydophila pneumoniae).